A 644-amino-acid chain; its full sequence is Exoribonuclease 2 (644 aa).

Positions 189–516 (REDLTALDFV…NHRLLKAVIK (328 aa)) constitute an RNB domain. The 83-residue stretch at 561–643 (GTRFAAEIVD…ETRGIIARPV (83 aa)) folds into the S1 motif domain.

It belongs to the RNR ribonuclease family. RNase II subfamily.

The protein resides in the cytoplasm. The enzyme catalyses Exonucleolytic cleavage in the 3'- to 5'-direction to yield nucleoside 5'-phosphates.. Involved in mRNA degradation. Hydrolyzes single-stranded polyribonucleotides processively in the 3' to 5' direction. This Shigella sonnei (strain Ss046) protein is Exoribonuclease 2.